The following is a 251-amino-acid chain: ATP synthase subunit a (251 aa).

5 helical membrane-spanning segments follow: residues 28 to 48 (TDTV…AFFL), 84 to 104 (IAPF…ISNW), 130 to 150 (INYV…AGIW), 192 to 212 (IFAG…IMWA), and 220 to 240 (FDLF…ILYF).

Belongs to the ATPase A chain family. As to quaternary structure, F-type ATPases have 2 components, CF(1) - the catalytic core - and CF(0) - the membrane proton channel. CF(1) has five subunits: alpha(3), beta(3), gamma(1), delta(1), epsilon(1). CF(0) has three main subunits: a(1), b(2) and c(9-12). The alpha and beta chains form an alternating ring which encloses part of the gamma chain. CF(1) is attached to CF(0) by a central stalk formed by the gamma and epsilon chains, while a peripheral stalk is formed by the delta and b chains.

Its subcellular location is the cell membrane. In terms of biological role, key component of the proton channel; it plays a direct role in the translocation of protons across the membrane. This is ATP synthase subunit a from Mycobacterium leprae (strain TN).